The sequence spans 72 residues: UPF0270 protein ETA_31870 (72 aa).

This sequence belongs to the UPF0270 family.

The sequence is that of UPF0270 protein ETA_31870 from Erwinia tasmaniensis (strain DSM 17950 / CFBP 7177 / CIP 109463 / NCPPB 4357 / Et1/99).